The chain runs to 430 residues: Glutamate-1-semialdehyde 2,1-aminomutase (430 aa).

At lysine 270 the chain carries N6-(pyridoxal phosphate)lysine.

It belongs to the class-III pyridoxal-phosphate-dependent aminotransferase family. HemL subfamily. Homodimer. Pyridoxal 5'-phosphate is required as a cofactor.

Its subcellular location is the cytoplasm. The catalysed reaction is (S)-4-amino-5-oxopentanoate = 5-aminolevulinate. Its pathway is porphyrin-containing compound metabolism; protoporphyrin-IX biosynthesis; 5-aminolevulinate from L-glutamyl-tRNA(Glu): step 2/2. In Cupriavidus necator (strain ATCC 17699 / DSM 428 / KCTC 22496 / NCIMB 10442 / H16 / Stanier 337) (Ralstonia eutropha), this protein is Glutamate-1-semialdehyde 2,1-aminomutase.